The following is a 568-amino-acid chain: Urease subunit alpha (568 aa).

Histidine 134, histidine 136, and lysine 217 together coordinate Ni(2+). Lysine 217 carries the post-translational modification N6-carboxylysine. Histidine 219 serves as a coordination point for substrate. Histidine 246 and histidine 272 together coordinate Ni(2+). Histidine 320 (proton donor) is an active-site residue. Aspartate 360 contributes to the Ni(2+) binding site.

The protein belongs to the metallo-dependent hydrolases superfamily. Urease alpha subunit family. Heterotrimer of UreA (gamma), UreB (beta) and UreC (alpha) subunits. Three heterotrimers associate to form the active enzyme. Ni cation serves as cofactor. In terms of processing, carboxylation allows a single lysine to coordinate two nickel ions.

It is found in the cytoplasm. The catalysed reaction is urea + 2 H2O + H(+) = hydrogencarbonate + 2 NH4(+). It functions in the pathway nitrogen metabolism; urea degradation; CO(2) and NH(3) from urea (urease route): step 1/1. This chain is Urease subunit alpha, found in Marinomonas sp. (strain MWYL1).